A 311-amino-acid chain; its full sequence is Homoserine kinase (311 aa).

88 to 98 (PEGLGLGSSGA) is a binding site for ATP.

It belongs to the GHMP kinase family. Homoserine kinase subfamily.

The protein resides in the cytoplasm. The catalysed reaction is L-homoserine + ATP = O-phospho-L-homoserine + ADP + H(+). It functions in the pathway amino-acid biosynthesis; L-threonine biosynthesis; L-threonine from L-aspartate: step 4/5. Functionally, catalyzes the ATP-dependent phosphorylation of L-homoserine to L-homoserine phosphate. This Saccharolobus islandicus (strain L.S.2.15 / Lassen #1) (Sulfolobus islandicus) protein is Homoserine kinase.